Here is a 382-residue protein sequence, read N- to C-terminus: Lipid-A-disaccharide synthase (382 aa).

The protein belongs to the LpxB family.

It catalyses the reaction 2-N,3-O-bis[(3R)-3-hydroxytetradecanoyl]-alpha-D-glucosaminyl 1-phosphate + UDP-2-N,3-O-bis[(3R)-3-hydroxytetradecanoyl]-alpha-D-glucosamine = lipid A disaccharide (E. coli) + UDP + H(+). The enzyme catalyses a lipid X + a UDP-2-N,3-O-bis[(3R)-3-hydroxyacyl]-alpha-D-glucosamine = a lipid A disaccharide + UDP + H(+). It participates in glycolipid biosynthesis; lipid IV(A) biosynthesis; lipid IV(A) from (3R)-3-hydroxytetradecanoyl-[acyl-carrier-protein] and UDP-N-acetyl-alpha-D-glucosamine: step 5/6. Condensation of UDP-2,3-diacylglucosamine and 2,3-diacylglucosamine-1-phosphate to form lipid A disaccharide, a precursor of lipid A, a phosphorylated glycolipid that anchors the lipopolysaccharide to the outer membrane of the cell. This chain is Lipid-A-disaccharide synthase, found in Salmonella arizonae (strain ATCC BAA-731 / CDC346-86 / RSK2980).